A 123-amino-acid chain; its full sequence is Small ribosomal subunit protein uS12 (123 aa).

D89 carries the 3-methylthioaspartic acid modification.

It belongs to the universal ribosomal protein uS12 family. Part of the 30S ribosomal subunit. Contacts proteins S8 and S17. May interact with IF1 in the 30S initiation complex.

Its function is as follows. With S4 and S5 plays an important role in translational accuracy. Interacts with and stabilizes bases of the 16S rRNA that are involved in tRNA selection in the A site and with the mRNA backbone. Located at the interface of the 30S and 50S subunits, it traverses the body of the 30S subunit contacting proteins on the other side and probably holding the rRNA structure together. The combined cluster of proteins S8, S12 and S17 appears to hold together the shoulder and platform of the 30S subunit. The sequence is that of Small ribosomal subunit protein uS12 from Caulobacter sp. (strain K31).